Consider the following 396-residue polypeptide: Cytochrome b (396 aa).

4 helical membrane passes run 37 to 57 (FGSL…ILAM), 81 to 102 (WLMR…YAHI), 117 to 137 (WNVG…GYVL), and 182 to 202 (FFTF…IHIM). Heme b contacts are provided by His87 and His101. His186 and His200 together coordinate heme b. His205 contacts a ubiquinone. The next 4 membrane-spanning stretches (helical) occupy residues 230–250 (FKDI…SLLA), 292–312 (LGGV…PFTH), 324–344 (LAQI…WLGG), and 351–371 (FILM…LVFP).

The protein belongs to the cytochrome b family. In terms of assembly, the cytochrome bc1 complex contains 3 respiratory subunits (MT-CYB, CYC1 and UQCRFS1), 2 core proteins (UQCRC1 and UQCRC2) and probably 6 low-molecular weight proteins. Heme b serves as cofactor.

The protein resides in the mitochondrion inner membrane. Its function is as follows. Component of the ubiquinol-cytochrome c reductase complex (complex III or cytochrome b-c1 complex) that is part of the mitochondrial respiratory chain. The b-c1 complex mediates electron transfer from ubiquinol to cytochrome c. Contributes to the generation of a proton gradient across the mitochondrial membrane that is then used for ATP synthesis. The polypeptide is Cytochrome b (mt-cyb) (Petromyzon marinus (Sea lamprey)).